We begin with the raw amino-acid sequence, 339 residues long: DNA-directed RNA polymerase subunit alpha (339 aa).

The segment at 1 to 233 (MVREEVAGST…DLFLPFLHAE (233 aa)) is alpha N-terminal domain (alpha-NTD). The segment at 264 to 339 (KKGIPLNYIF…IDLLKNKLSF (76 aa)) is alpha C-terminal domain (alpha-CTD).

The protein belongs to the RNA polymerase alpha chain family. In terms of assembly, in plastids the minimal PEP RNA polymerase catalytic core is composed of four subunits: alpha, beta, beta', and beta''. When a (nuclear-encoded) sigma factor is associated with the core the holoenzyme is formed, which can initiate transcription.

The protein localises to the plastid. It is found in the chloroplast. The enzyme catalyses RNA(n) + a ribonucleoside 5'-triphosphate = RNA(n+1) + diphosphate. In terms of biological role, DNA-dependent RNA polymerase catalyzes the transcription of DNA into RNA using the four ribonucleoside triphosphates as substrates. In Psathyrostachys rupestris (Hordeum rupestre), this protein is DNA-directed RNA polymerase subunit alpha.